Consider the following 316-residue polypeptide: Pantothenate kinase (316 aa).

95-102 (GSVAVGKS) is a binding site for ATP.

This sequence belongs to the prokaryotic pantothenate kinase family.

The protein localises to the cytoplasm. It carries out the reaction (R)-pantothenate + ATP = (R)-4'-phosphopantothenate + ADP + H(+). The protein operates within cofactor biosynthesis; coenzyme A biosynthesis; CoA from (R)-pantothenate: step 1/5. This is Pantothenate kinase from Erwinia tasmaniensis (strain DSM 17950 / CFBP 7177 / CIP 109463 / NCPPB 4357 / Et1/99).